Here is a 26-residue protein sequence, read N- to C-terminus: Hemocyanin subunit B (26 aa).

It belongs to the tyrosinase family. Hemocyanin subfamily. As to expression, hemolymph.

The protein localises to the secreted. It is found in the extracellular space. Its function is as follows. Hemocyanins are copper-containing oxygen carriers occurring freely dissolved in the hemolymph of many mollusks and arthropods. The chain is Hemocyanin subunit B from Carcinus maenas (Common shore crab).